We begin with the raw amino-acid sequence, 153 residues long: 3-hydroxyacyl-[acyl-carrier-protein] dehydratase FabZ (153 aa).

Residue H57 is part of the active site.

It belongs to the thioester dehydratase family. FabZ subfamily.

It localises to the cytoplasm. The enzyme catalyses a (3R)-hydroxyacyl-[ACP] = a (2E)-enoyl-[ACP] + H2O. In terms of biological role, involved in unsaturated fatty acids biosynthesis. Catalyzes the dehydration of short chain beta-hydroxyacyl-ACPs and long chain saturated and unsaturated beta-hydroxyacyl-ACPs. In Xanthomonas oryzae pv. oryzae (strain MAFF 311018), this protein is 3-hydroxyacyl-[acyl-carrier-protein] dehydratase FabZ.